Here is a 485-residue protein sequence, read N- to C-terminus: Glutamyl-tRNA(Gln) amidotransferase subunit A (485 aa).

Residues lysine 79 and serine 154 each act as charge relay system in the active site. Serine 178 (acyl-ester intermediate) is an active-site residue.

Belongs to the amidase family. GatA subfamily. As to quaternary structure, heterotrimer of A, B and C subunits.

It catalyses the reaction L-glutamyl-tRNA(Gln) + L-glutamine + ATP + H2O = L-glutaminyl-tRNA(Gln) + L-glutamate + ADP + phosphate + H(+). Its function is as follows. Allows the formation of correctly charged Gln-tRNA(Gln) through the transamidation of misacylated Glu-tRNA(Gln) in organisms which lack glutaminyl-tRNA synthetase. The reaction takes place in the presence of glutamine and ATP through an activated gamma-phospho-Glu-tRNA(Gln). The polypeptide is Glutamyl-tRNA(Gln) amidotransferase subunit A (Clostridium botulinum (strain Alaska E43 / Type E3)).